The primary structure comprises 147 residues: Hemoglobin subunit beta (147 aa).

Valine 2 is subject to N-acetylvaline. One can recognise a Globin domain in the interval histidine 3–histidine 147. Threonine 13 carries the post-translational modification Phosphothreonine. Position 45 is a phosphoserine (serine 45). Residue lysine 60 is modified to N6-acetyllysine. A heme b-binding site is contributed by histidine 64. Lysine 83 carries the N6-acetyllysine modification. Position 93 (histidine 93) interacts with heme b. Cysteine 94 is modified (S-nitrosocysteine). Lysine 145 bears the N6-acetyllysine mark.

It belongs to the globin family. As to quaternary structure, heterotetramer of two alpha chains and two beta chains. As to expression, red blood cells.

In terms of biological role, involved in oxygen transport from the lung to the various peripheral tissues. The polypeptide is Hemoglobin subunit beta (HBB) (Alouatta belzebul (Red-handed howler monkey)).